Reading from the N-terminus, the 315-residue chain is Ribosomal RNA small subunit methyltransferase H (315 aa).

Residues 37-39 (GGH), Asp-57, Phe-83, Asp-105, and Gln-112 contribute to the S-adenosyl-L-methionine site.

Belongs to the methyltransferase superfamily. RsmH family.

The protein localises to the cytoplasm. The catalysed reaction is cytidine(1402) in 16S rRNA + S-adenosyl-L-methionine = N(4)-methylcytidine(1402) in 16S rRNA + S-adenosyl-L-homocysteine + H(+). Functionally, specifically methylates the N4 position of cytidine in position 1402 (C1402) of 16S rRNA. In Pseudomonas fluorescens (strain SBW25), this protein is Ribosomal RNA small subunit methyltransferase H.